Here is a 142-residue protein sequence, read N- to C-terminus: UPF0306 protein Ent638_3591 (142 aa).

Belongs to the UPF0306 family.

This is UPF0306 protein Ent638_3591 from Enterobacter sp. (strain 638).